A 243-amino-acid polypeptide reads, in one-letter code: Triosephosphate isomerase (243 aa).

Asn-9–Lys-11 is a substrate binding site. His-96 (electrophile) is an active-site residue. Glu-165 acts as the Proton acceptor in catalysis. Substrate is bound by residues Gly-171, Ser-204, and Gly-225–Gly-226.

Belongs to the triosephosphate isomerase family. In terms of assembly, homodimer.

It is found in the cytoplasm. The enzyme catalyses D-glyceraldehyde 3-phosphate = dihydroxyacetone phosphate. It functions in the pathway carbohydrate biosynthesis; gluconeogenesis. Its pathway is carbohydrate degradation; glycolysis; D-glyceraldehyde 3-phosphate from glycerone phosphate: step 1/1. In terms of biological role, involved in the gluconeogenesis. Catalyzes stereospecifically the conversion of dihydroxyacetone phosphate (DHAP) to D-glyceraldehyde-3-phosphate (G3P). This Synechococcus sp. (strain CC9902) protein is Triosephosphate isomerase.